A 96-amino-acid chain; its full sequence is Co-chaperonin GroES (96 aa).

This sequence belongs to the GroES chaperonin family. As to quaternary structure, heptamer of 7 subunits arranged in a ring. Interacts with the chaperonin GroEL.

It localises to the cytoplasm. Its function is as follows. Together with the chaperonin GroEL, plays an essential role in assisting protein folding. The GroEL-GroES system forms a nano-cage that allows encapsulation of the non-native substrate proteins and provides a physical environment optimized to promote and accelerate protein folding. GroES binds to the apical surface of the GroEL ring, thereby capping the opening of the GroEL channel. This Buchnera aphidicola subsp. Acyrthosiphon pisum (strain 5A) protein is Co-chaperonin GroES.